A 598-amino-acid chain; its full sequence is MAMLSTASVSGSVDLPRGTMKVDSSASPEVVSDLPPSSPKGSPDRHDPSTSSPSPSRGGDNQSEVISKSEEYRQLFRLPADEILVQDFNCACQESILMQGHMYLFIHYICFYSNIFGYETKKIIPFAEISCVKRAKTAGIFPNAIEILAGGKKYFFASFLSRDEAFKLIHDGWLEYGSAVKSEGEILVTEPQVSDGVVKRARSSMDLANELDIPVRDETLHLSSSSSLPVISQNGVPPSSVQRHAEPDVDVVAANTFNWKPEDTDAPKLSSDFTKVAEAKFSIPVEEFFRLFFSDGAVSFVESFHKNCGDKEFRCTSWQPHEKLGHTRNVSFQHPIKIYFGAKFGGCQESQKFRMYRNSHLVIETSQEISDVPYADYFTVEGVWDLKRDCRDSVEGCILDVYVNVAFSKRTVWKGKIVQSTLEECREAYAHWIRMAHELLKQKKLENQEGNKLIEDGEPLAAREERVSECDEEGKVEMVGEGVVKKSLKEAWVNLTSFVKRQSGTRQVIVLAFAVILLMQVTIVVLLKKGGGGQVEYHERYDEYSVNGETLGWLEKRMHFLREEMMMVEDRLQRMRQDHAALKAQFHHLERLLRRNKQ.

Residues 1–11 (MAMLSTASVSG) show a composition bias toward polar residues. The tract at residues 1 to 64 (MAMLSTASVS…PSRGGDNQSE (64 aa)) is disordered. A chloroplast-targeting transit peptide spans 1–68 (MAMLSTASVS…GDNQSEVISK (68 aa)). A glycan (N-linked (GlcNAc...) asparagine) is linked at N61. The 65-residue stretch at 70–134 (EEYRQLFRLP…PFAEISCVKR (65 aa)) folds into the GRAM domain. The 173-residue stretch at 272-444 (DFTKVAEAKF…MAHELLKQKK (173 aa)) folds into the VASt domain. N-linked (GlcNAc...) asparagine glycans are attached at residues N329 and N494. Residues 507 to 527 (QVIVLAFAVILLMQVTIVVLL) form a helical membrane-spanning segment. Residues 553 to 595 (WLEKRMHFLREEMMMVEDRLQRMRQDHAALKAQFHHLERLLRR) adopt a coiled-coil conformation.

The protein localises to the membrane. The protein resides in the plastid. It localises to the chloroplast. Involved in ethylene- and salicylic acid-dependent cell death control associated with cells in the vicinity of vascular bundles. The protein is Protein VASCULAR ASSOCIATED DEATH 1, chloroplastic of Arabidopsis thaliana (Mouse-ear cress).